Reading from the N-terminus, the 679-residue chain is Protein CASP (679 aa).

The Cytoplasmic portion of the chain corresponds to 1 to 614 (MDTSVYSHAL…VILQNKMTRM (614 aa)). Coiled coils occupy residues 14–90 (AKAD…EKVL) and 178–341 (RNWK…NYSD). Ser364 is subject to Phosphoserine. Residues 385–444 (ANKKLQATLAEYRSKSTAQEEERNELKKSVDQLKQQIATLKEANEKLETDLEKVENVSPH) adopt a coiled-coil conformation. Phosphoserine is present on residues Ser450 and Ser453. The stretch at 492–540 (IVTKQRDRFRSRNMDLEKQLRQGNSEKGKLKLEISKLKGDNTKLYERIR) forms a coiled coil. Ser555 carries the phosphoserine modification. The chain crosses the membrane as a helical; Anchor for type IV membrane protein span at residues 615–635 (VFLFYCIGLHGLVFMMSMYVI). The Lumenal segment spans residues 636–679 (NISGYMTPEVGIVQSAKSSSNLNGGLGGAEKVAAGVGSVHGINR).

It belongs to the CASP family.

It localises to the golgi apparatus membrane. Functionally, may be involved in intra-Golgi transport. The sequence is that of Protein CASP (COY1) from Saccharomyces cerevisiae (strain ATCC 204508 / S288c) (Baker's yeast).